The sequence spans 327 residues: E3 ubiquitin-protein ligase ZNRF4 (327 aa).

The signal sequence occupies residues 1-28; that stretch reads MARFAWTRVAPVALVTFWLVLSLSPTDA. Topologically, residues 29–150 are lumenal; sequence QVNLSSVDFL…EPCPDPECHP (122 aa). Asn-31 carries N-linked (GlcNAc...) asparagine glycosylation. The chain crosses the membrane as a helical span at residues 151 to 171; it reads VVVASWALARALALAASTLFV. Topologically, residues 172–327 are cytoplasmic; it reads LRQLWPWVRG…AQSEATSELS (156 aa). The RING-type; atypical zinc-finger motif lies at 209-252; the sequence is CAICLDDYEEGERLKILPCAHAYHCRCIDPWFSRAAQRSCPLCK. Over residues 256–265 the composition is skewed to polar residues; it reads ASTHDGSTDG. The tract at residues 256–279 is disordered; that stretch reads ASTHDGSTDGSVGGEEPPLPGHRP.

In terms of assembly, interacts with CANX. In terms of tissue distribution, expressed exclusively in spermatids (at protein level).

It is found in the endoplasmic reticulum membrane. The enzyme catalyses S-ubiquitinyl-[E2 ubiquitin-conjugating enzyme]-L-cysteine + [acceptor protein]-L-lysine = [E2 ubiquitin-conjugating enzyme]-L-cysteine + N(6)-ubiquitinyl-[acceptor protein]-L-lysine.. The protein operates within protein modification; protein ubiquitination. Functionally, E3 ubiquitin-protein ligase that acts as a negative regulator of NOD2 signaling by mediating ubiquitination and degradation of RIPK2. Also catalyzes ubiquitination and proteasomal degradation of CANX within the endoplasmic reticulum. Could have a role in spermatogenesis. The chain is E3 ubiquitin-protein ligase ZNRF4 from Mus musculus (Mouse).